The sequence spans 144 residues: 3-hydroxyacyl-[acyl-carrier-protein] dehydratase FabZ (144 aa).

His51 is an active-site residue.

This sequence belongs to the thioester dehydratase family. FabZ subfamily.

It localises to the cytoplasm. The catalysed reaction is a (3R)-hydroxyacyl-[ACP] = a (2E)-enoyl-[ACP] + H2O. Its function is as follows. Involved in unsaturated fatty acids biosynthesis. Catalyzes the dehydration of short chain beta-hydroxyacyl-ACPs and long chain saturated and unsaturated beta-hydroxyacyl-ACPs. The polypeptide is 3-hydroxyacyl-[acyl-carrier-protein] dehydratase FabZ (Clostridium botulinum (strain Loch Maree / Type A3)).